The following is a 174-amino-acid chain: Shikimate kinase (174 aa).

14–19 contacts ATP; it reads GAGKST. Mg(2+) is bound at residue Ser-18. The substrate site is built by Asp-36, Arg-60, and Gly-82. Arg-120 provides a ligand contact to ATP. Arg-139 lines the substrate pocket. Residue Gln-156 coordinates ATP.

This sequence belongs to the shikimate kinase family. In terms of assembly, monomer. Requires Mg(2+) as cofactor.

The protein localises to the cytoplasm. It carries out the reaction shikimate + ATP = 3-phosphoshikimate + ADP + H(+). It functions in the pathway metabolic intermediate biosynthesis; chorismate biosynthesis; chorismate from D-erythrose 4-phosphate and phosphoenolpyruvate: step 5/7. Catalyzes the specific phosphorylation of the 3-hydroxyl group of shikimic acid using ATP as a cosubstrate. The protein is Shikimate kinase of Vibrio cholerae serotype O1 (strain ATCC 39541 / Classical Ogawa 395 / O395).